The primary structure comprises 417 residues: Serine hydroxymethyltransferase (417 aa).

(6S)-5,6,7,8-tetrahydrofolate is bound by residues leucine 121 and 125–127; that span reads GHL. Lysine 229 is subject to N6-(pyridoxal phosphate)lysine. Residue 355-357 participates in (6S)-5,6,7,8-tetrahydrofolate binding; sequence SPF.

The protein belongs to the SHMT family. As to quaternary structure, homodimer. Pyridoxal 5'-phosphate is required as a cofactor.

The protein localises to the cytoplasm. It catalyses the reaction (6R)-5,10-methylene-5,6,7,8-tetrahydrofolate + glycine + H2O = (6S)-5,6,7,8-tetrahydrofolate + L-serine. Its pathway is one-carbon metabolism; tetrahydrofolate interconversion. It participates in amino-acid biosynthesis; glycine biosynthesis; glycine from L-serine: step 1/1. Its function is as follows. Catalyzes the reversible interconversion of serine and glycine with tetrahydrofolate (THF) serving as the one-carbon carrier. This reaction serves as the major source of one-carbon groups required for the biosynthesis of purines, thymidylate, methionine, and other important biomolecules. Also exhibits THF-independent aldolase activity toward beta-hydroxyamino acids, producing glycine and aldehydes, via a retro-aldol mechanism. In Shewanella amazonensis (strain ATCC BAA-1098 / SB2B), this protein is Serine hydroxymethyltransferase.